A 205-amino-acid chain; its full sequence is Ribosomal RNA small subunit methyltransferase G (205 aa).

S-adenosyl-L-methionine-binding positions include glycine 66, phenylalanine 71, 119 to 120 (IE), and arginine 135.

The protein belongs to the methyltransferase superfamily. RNA methyltransferase RsmG family.

It localises to the cytoplasm. The enzyme catalyses guanosine(527) in 16S rRNA + S-adenosyl-L-methionine = N(7)-methylguanosine(527) in 16S rRNA + S-adenosyl-L-homocysteine. In terms of biological role, specifically methylates the N7 position of guanine in position 527 of 16S rRNA. The polypeptide is Ribosomal RNA small subunit methyltransferase G (Rhizobium etli (strain ATCC 51251 / DSM 11541 / JCM 21823 / NBRC 15573 / CFN 42)).